A 220-amino-acid chain; its full sequence is Ribonuclease HII (220 aa).

An RNase H type-2 domain is found at 32–220 (KHIAGIDEAG…FAPIKGRFDC (189 aa)). A divalent metal cation-binding residues include aspartate 38, glutamate 39, and aspartate 130.

Belongs to the RNase HII family. Requires Mn(2+) as cofactor. The cofactor is Mg(2+).

Its subcellular location is the cytoplasm. The catalysed reaction is Endonucleolytic cleavage to 5'-phosphomonoester.. In terms of biological role, endonuclease that specifically degrades the RNA of RNA-DNA hybrids. The chain is Ribonuclease HII from Brucella suis (strain ATCC 23445 / NCTC 10510).